The primary structure comprises 548 residues: Chaperonin GroEL (548 aa).

Residues threonine 30–proline 33, lysine 51, aspartate 87–threonine 91, glycine 415, and aspartate 495 contribute to the ATP site.

The protein belongs to the chaperonin (HSP60) family. As to quaternary structure, forms a cylinder of 14 subunits composed of two heptameric rings stacked back-to-back. Interacts with the co-chaperonin GroES.

Its subcellular location is the cytoplasm. It carries out the reaction ATP + H2O + a folded polypeptide = ADP + phosphate + an unfolded polypeptide.. Functionally, together with its co-chaperonin GroES, plays an essential role in assisting protein folding. The GroEL-GroES system forms a nano-cage that allows encapsulation of the non-native substrate proteins and provides a physical environment optimized to promote and accelerate protein folding. The sequence is that of Chaperonin GroEL from Colwellia psychrerythraea (strain 34H / ATCC BAA-681) (Vibrio psychroerythus).